The following is an 80-amino-acid chain: Defensin-like protein 46 (80 aa).

The signal sequence occupies residues 1–27; it reads MGSTKTLVTCFLTIILAVSLSNHNVLA. 4 cysteine pairs are disulfide-bonded: cysteine 40–cysteine 78, cysteine 44–cysteine 65, cysteine 50–cysteine 76, and cysteine 54–cysteine 77.

The protein belongs to the DEFL family.

The protein resides in the secreted. This Arabidopsis thaliana (Mouse-ear cress) protein is Defensin-like protein 46.